Here is a 195-residue protein sequence, read N- to C-terminus: Phenoloxidase subunit 1 (195 aa).

His10 contacts Cu cation. N-linked (GlcNAc...) asparagine glycans are attached at residues Asn77, Asn97, and Asn98.

This sequence belongs to the tyrosinase family. As to quaternary structure, heterodimer. The cofactor is Cu(2+).

It localises to the secreted. It carries out the reaction 2 L-dopa + O2 = 2 L-dopaquinone + 2 H2O. The catalysed reaction is L-tyrosine + O2 = L-dopaquinone + H2O. Functionally, this is a copper-containing oxidase that functions in the formation of pigments such as melanins and other polyphenolic compounds. Catalyzes the rate-limiting conversions of tyrosine to DOPA, DOPA to DOPA-quinone and possibly 5,6 dihydroxyindole to indole-5'6 quinone. In Simulium damnosum (Black fly), this protein is Phenoloxidase subunit 1.